The following is a 288-amino-acid chain: Co-chaperone protein DjlA (288 aa).

Topologically, residues 1–6 (MNFIGK) are periplasmic. The chain crosses the membrane as a helical span at residues 7–30 (ILGFIIGYRFGGLFGGIAGLILGH). The Cytoplasmic portion of the chain corresponds to 31–288 (IADKKLYELG…DLICKVKGWK (258 aa)). Residues 222 to 288 (DAYKVLGVNA…DLICKVKGWK (67 aa)) form the J domain.

As to quaternary structure, homodimer.

Its subcellular location is the cell inner membrane. In terms of biological role, regulatory DnaK co-chaperone. Direct interaction between DnaK and DjlA is needed for the induction of the wcaABCDE operon, involved in the synthesis of a colanic acid polysaccharide capsule, possibly through activation of the RcsB/RcsC phosphotransfer signaling pathway. The colanic acid capsule may help the bacterium survive conditions outside the host. The protein is Co-chaperone protein DjlA of Mannheimia succiniciproducens (strain KCTC 0769BP / MBEL55E).